A 215-amino-acid chain; its full sequence is MKTEVKICGLKTAEAVERAVALGASHVGFIFFPKSPRNIEPDDAGRLAARARGRAKIVAVTVDADNDGLDEIVSALDPDVLQLHGSETPERVLSIKALYGLPVMKALAVREASDLERIDPYLGIVDRFLLDAKPPAGSDLPGGNGISFDWRLLDALDGSVDYMLSGGLNAGNIADALALTGARAIDTSSGVESAPGIKDLTLMEAFFEAVRRAEA.

It belongs to the TrpF family.

It carries out the reaction N-(5-phospho-beta-D-ribosyl)anthranilate = 1-(2-carboxyphenylamino)-1-deoxy-D-ribulose 5-phosphate. It participates in amino-acid biosynthesis; L-tryptophan biosynthesis; L-tryptophan from chorismate: step 3/5. The protein is N-(5'-phosphoribosyl)anthranilate isomerase of Rhizobium meliloti (strain 1021) (Ensifer meliloti).